The primary structure comprises 265 residues: S-acyl fatty acid synthase thioesterase, medium chain (265 aa).

N-acetylmethionine is present on methionine 1. Active-site residues include serine 101 and histidine 237.

Belongs to the thioesterase family. Interacts (via C-terminus) with FASN. In terms of tissue distribution, detected both in lactating and non-lactating breast epithelium (at protein level). Isoform 2 is up-regulated in bone marrow-derived mononuclear cells of rheumatoid arthritis patients.

The protein resides in the cytoplasm. The protein localises to the cytosol. It carries out the reaction (9Z)-octadecenoyl-[ACP] + H2O = (9Z)-octadecenoate + holo-[ACP] + H(+). The catalysed reaction is decanoyl-CoA + H2O = decanoate + CoA + H(+). It catalyses the reaction dodecanoyl-CoA + H2O = dodecanoate + CoA + H(+). The enzyme catalyses tetradecanoyl-CoA + H2O = tetradecanoate + CoA + H(+). It carries out the reaction hexadecanoyl-CoA + H2O = hexadecanoate + CoA + H(+). Its function is as follows. Contributes to the release of free fatty acids from fatty acid synthase (FASN). Has broad substrate specificity, giving rise to a range of free fatty acids with chain lengths between 10 and 16 carbon atoms (C10 - C16). The chain is S-acyl fatty acid synthase thioesterase, medium chain from Homo sapiens (Human).